Here is a 118-residue protein sequence, read N- to C-terminus: MPRVKTGVVRRRRHKKILKLAKGFYSGRRKHYRKAKEQLERSMYYSFRDRKQKKRDFRKLWIIRINAACRLNGMNYSTFINGLSKAGIELDRKILADMAMNDAAAFSAVAASAKAALK.

This sequence belongs to the bacterial ribosomal protein bL20 family.

Its function is as follows. Binds directly to 23S ribosomal RNA and is necessary for the in vitro assembly process of the 50S ribosomal subunit. It is not involved in the protein synthesizing functions of that subunit. This chain is Large ribosomal subunit protein bL20, found in Sulfurimonas denitrificans (strain ATCC 33889 / DSM 1251) (Thiomicrospira denitrificans (strain ATCC 33889 / DSM 1251)).